A 435-amino-acid polypeptide reads, in one-letter code: Enolase (435 aa).

(2R)-2-phosphoglycerate is bound at residue glutamine 163. Glutamate 205 functions as the Proton donor in the catalytic mechanism. Mg(2+) contacts are provided by aspartate 243, glutamate 292, and aspartate 319. The (2R)-2-phosphoglycerate site is built by lysine 344, arginine 373, serine 374, and lysine 395. Residue lysine 344 is the Proton acceptor of the active site.

The protein belongs to the enolase family. Mg(2+) serves as cofactor.

It localises to the cytoplasm. It is found in the secreted. Its subcellular location is the cell surface. It carries out the reaction (2R)-2-phosphoglycerate = phosphoenolpyruvate + H2O. The protein operates within carbohydrate degradation; glycolysis; pyruvate from D-glyceraldehyde 3-phosphate: step 4/5. Its function is as follows. Catalyzes the reversible conversion of 2-phosphoglycerate (2-PG) into phosphoenolpyruvate (PEP). It is essential for the degradation of carbohydrates via glycolysis. The protein is Enolase of Streptococcus suis (strain 98HAH33).